The chain runs to 153 residues: Large ribosomal subunit protein uL15 (153 aa).

A disordered region spans residues 21 to 41 (RGIGSGKGKTGGRGIKGQKSR). Gly residues predominate over residues 23–35 (IGSGKGKTGGRGI).

The protein belongs to the universal ribosomal protein uL15 family. In terms of assembly, part of the 50S ribosomal subunit.

Functionally, binds to the 23S rRNA. This chain is Large ribosomal subunit protein uL15, found in Rickettsia felis (strain ATCC VR-1525 / URRWXCal2) (Rickettsia azadi).